A 1463-amino-acid chain; its full sequence is Clustered mitochondria protein homolog (1463 aa).

The segment at Met1–Glu79 is disordered. Residues Lys10–Gly22 are compositionally biased toward low complexity. In terms of domain architecture, Clu spans Arg374 to Leu616. 3 disordered regions span residues Ala684–Ala753, Gly942–Ser988, and Gln1387–Ser1463. Residues Lys692–Ala702 are compositionally biased toward low complexity. The span at Glu703–Thr731 shows a compositional bias: basic and acidic residues. Residues Gly955–Lys964 show a composition bias toward basic residues. A compositionally biased stretch (gly residues) spans Arg965–Arg980. The segment covering Ala1438–Ala1456 has biased composition (low complexity).

This sequence belongs to the CLU family.

It localises to the cytoplasm. Its function is as follows. mRNA-binding protein involved in proper cytoplasmic distribution of mitochondria. The chain is Clustered mitochondria protein homolog from Anopheles gambiae (African malaria mosquito).